Consider the following 184-residue polypeptide: Ribosome-recycling factor (184 aa).

The segment covering arginine 133–lysine 162 has biased composition (basic and acidic residues). The disordered stretch occupies residues arginine 133–leucine 163.

Belongs to the RRF family.

Its subcellular location is the cytoplasm. In terms of biological role, responsible for the release of ribosomes from messenger RNA at the termination of protein biosynthesis. May increase the efficiency of translation by recycling ribosomes from one round of translation to another. In Sphingopyxis alaskensis (strain DSM 13593 / LMG 18877 / RB2256) (Sphingomonas alaskensis), this protein is Ribosome-recycling factor.